Consider the following 603-residue polypeptide: Elongation factor 4 (603 aa).

The tr-type G domain occupies 7–189; the sequence is SRIRNFSIIA…AIVQQVPPPA (183 aa). GTP-binding positions include 19 to 24 and 136 to 139; these read DHGKST and NKID.

The protein belongs to the TRAFAC class translation factor GTPase superfamily. Classic translation factor GTPase family. LepA subfamily.

It is found in the cell inner membrane. The catalysed reaction is GTP + H2O = GDP + phosphate + H(+). Required for accurate and efficient protein synthesis under certain stress conditions. May act as a fidelity factor of the translation reaction, by catalyzing a one-codon backward translocation of tRNAs on improperly translocated ribosomes. Back-translocation proceeds from a post-translocation (POST) complex to a pre-translocation (PRE) complex, thus giving elongation factor G a second chance to translocate the tRNAs correctly. Binds to ribosomes in a GTP-dependent manner. The chain is Elongation factor 4 from Synechocystis sp. (strain ATCC 27184 / PCC 6803 / Kazusa).